The primary structure comprises 482 residues: tRNA sulfurtransferase (482 aa).

Residues 61–165 (EQAIEALACI…GEELFIVSAI (105 aa)) enclose the THUMP domain. ATP contacts are provided by residues 183–184 (LI), Lys-265, Gly-287, and Gln-296. Cys-344 and Cys-456 form a disulfide bridge. In terms of domain architecture, Rhodanese spans 404 to 482 (SGDNEVILDI…GFANVKVYRP (79 aa)). Residue Cys-456 is the Cysteine persulfide intermediate of the active site.

Belongs to the ThiI family.

The protein resides in the cytoplasm. The enzyme catalyses [ThiI sulfur-carrier protein]-S-sulfanyl-L-cysteine + a uridine in tRNA + 2 reduced [2Fe-2S]-[ferredoxin] + ATP + H(+) = [ThiI sulfur-carrier protein]-L-cysteine + a 4-thiouridine in tRNA + 2 oxidized [2Fe-2S]-[ferredoxin] + AMP + diphosphate. It carries out the reaction [ThiS sulfur-carrier protein]-C-terminal Gly-Gly-AMP + S-sulfanyl-L-cysteinyl-[cysteine desulfurase] + AH2 = [ThiS sulfur-carrier protein]-C-terminal-Gly-aminoethanethioate + L-cysteinyl-[cysteine desulfurase] + A + AMP + 2 H(+). It participates in cofactor biosynthesis; thiamine diphosphate biosynthesis. In terms of biological role, catalyzes the ATP-dependent transfer of a sulfur to tRNA to produce 4-thiouridine in position 8 of tRNAs, which functions as a near-UV photosensor. Also catalyzes the transfer of sulfur to the sulfur carrier protein ThiS, forming ThiS-thiocarboxylate. This is a step in the synthesis of thiazole, in the thiamine biosynthesis pathway. The sulfur is donated as persulfide by IscS. The sequence is that of tRNA sulfurtransferase from Aeromonas hydrophila subsp. hydrophila (strain ATCC 7966 / DSM 30187 / BCRC 13018 / CCUG 14551 / JCM 1027 / KCTC 2358 / NCIMB 9240 / NCTC 8049).